We begin with the raw amino-acid sequence, 314 residues long: Three-prime repair exonuclease 1 (314 aa).

Residues aspartate 18 and glutamate 20 each coordinate Mg(2+). 20–21 (EA) is a substrate binding site. Residue serine 78 is modified to Phosphoserine. A substrate-binding site is contributed by tyrosine 129. Serine 167 carries the phosphoserine modification. Histidine 195 acts as the Proton donor/acceptor in catalysis. Aspartate 200 serves as a coordination point for Mg(2+). Position 200 (aspartate 200) interacts with substrate. The segment at 236 to 314 (TASARTKPRP…YGLSLATPGE (79 aa)) is necessary for endoplasmic reticulum localization. The interval 240–278 (RTKPRPSAVTTTAHLATTRNTSPSLGESRGTKDLPPVKD) is disordered. The interaction with UBQLN1 stretch occupies residues 243-314 (PRPSAVTTTA…YGLSLATPGE (72 aa)). Residues 247 to 260 (AVTTTAHLATTRNT) are compositionally biased toward low complexity. Serine 261 is subject to Phosphoserine. The necessary for cytoplasmic retention stretch occupies residues 281-314 (ALSREGLLAPLGLLAILTLAVATLYGLSLATPGE).

It belongs to the exonuclease superfamily. TREX family. In terms of assembly, homodimer. Interacts (via proline-rich region) with TCERG1/CA150 (via the second WW domain). Component of the SET complex, composed of at least ANP32A, APEX1, HMGB2, NME1, SET and TREX1. Within this complex, directly interacts with SET; this interaction does not result in TREX1 inhibition. Also interacts with NME1, but only following translocation to the nucleus. Directly interacts with UBQLN1 (via ubiquitin-like domain); the interaction may control TREX1 subcellular location. The cofactor is Mg(2+). Post-translationally, ubiquitinated, but not targeted to proteasomal degradation. Ubiquitination may be important for interaction with UBQLN1. In terms of tissue distribution, detected in thymus, spleen, liver, brain, heart, small intestine and colon.

It localises to the nucleus. The protein resides in the cytoplasm. The protein localises to the cytosol. It is found in the endoplasmic reticulum membrane. It carries out the reaction Exonucleolytic cleavage in the 3'- to 5'-direction to yield nucleoside 5'-phosphates.. Major cellular 3'-to-5' DNA exonuclease which digests single-stranded DNA (ssDNA) and double-stranded DNA (dsDNA) with mismatched 3' termini. Prevents cell-intrinsic initiation of autoimmunity. Acts by metabolizing DNA fragments from endogenous retroelements, including L1, LTR and SINE elements. Plays a key role in degradation of DNA fragments at cytosolic micronuclei arising from genome instability: its association with the endoplasmic reticulum membrane directs TREX1 to ruptured micronuclei, leading to micronuclear DNA degradation. Micronuclear DNA degradation is required to limit CGAS activation and subsequent inflammation. Unless degraded, these DNA fragments accumulate in the cytosol and activate the cGAS-STING innate immune signaling, leading to the production of type I interferon. Prevents chronic ATM-dependent checkpoint activation, by processing ssDNA polynucleotide species arising from the processing of aberrant DNA replication intermediates. Inefficiently degrades oxidized DNA, such as that generated upon antimicrobial reactive oxygen production or upon absorption of UV light. During GZMA-mediated cell death, contributes to DNA damage in concert with NME1. NME1 nicks one strand of DNA and TREX1 removes bases from the free 3' end to enhance DNA damage and prevent DNA end reannealing and rapid repair. The polypeptide is Three-prime repair exonuclease 1 (Homo sapiens (Human)).